Consider the following 289-residue polypeptide: Probable porphobilinogen deaminase (289 aa).

Cys-233 carries the post-translational modification S-(dipyrrolylmethanemethyl)cysteine.

This sequence belongs to the HMBS family. Requires dipyrromethane as cofactor.

The catalysed reaction is 4 porphobilinogen + H2O = hydroxymethylbilane + 4 NH4(+). The protein operates within porphyrin-containing compound metabolism; protoporphyrin-IX biosynthesis; coproporphyrinogen-III from 5-aminolevulinate: step 2/4. Tetrapolymerization of the monopyrrole PBG into the hydroxymethylbilane pre-uroporphyrinogen in several discrete steps. In Methanothermobacter thermautotrophicus (strain ATCC 29096 / DSM 1053 / JCM 10044 / NBRC 100330 / Delta H) (Methanobacterium thermoautotrophicum), this protein is Probable porphobilinogen deaminase (hemC).